Here is a 66-residue protein sequence, read N- to C-terminus: Moricin-1 (66 aa).

Positions 1 to 24 are cleaved as a signal peptide; that stretch reads MNILKFFFVFIVAMSLVSCSTAAP.

As to expression, expressed in fat body and to a lesser extent in hemocyte and Malpighian tubules.

It localises to the secreted. Functionally, has antibacterial activity against Gram-positive and Gram-negative bacteria. Probably acts by disturbing membrane functions with its amphipathic structure. This chain is Moricin-1 (MOR1), found in Bombyx mori (Silk moth).